The following is a 162-amino-acid chain: Cyanate hydratase (162 aa).

Catalysis depends on residues Arg-103, Glu-106, and Ser-129.

This sequence belongs to the cyanase family.

The catalysed reaction is cyanate + hydrogencarbonate + 3 H(+) = NH4(+) + 2 CO2. In terms of biological role, catalyzes the reaction of cyanate with bicarbonate to produce ammonia and carbon dioxide. This Pyrenophora tritici-repentis (strain Pt-1C-BFP) (Wheat tan spot fungus) protein is Cyanate hydratase.